We begin with the raw amino-acid sequence, 439 residues long: ATP-dependent RNA helicase RhlB (439 aa).

A Q motif motif is present at residues 9-37; the sequence is QKFADLPLCDEVKQALNENGFEHCTPIQA. Residues 40 to 219 form the Helicase ATP-binding domain; it reads LPVLLEKKDI…YDHMNDPVKV (180 aa). 53 to 60 is a binding site for ATP; the sequence is AQTGTGKT. The DEAD box signature appears at 165–168; sequence DEAD. The 148-residue stretch at 243–390 folds into the Helicase C-terminal domain; sequence KLKLLHSLIE…VTSYDRDALI (148 aa). Positions 394-439 are disordered; the sequence is PPVKIHRKPHAGGRNLRDRNGSPRPSGSHRSGSGRPPRHDRTRRHS. Over residues 415–428 the composition is skewed to low complexity; the sequence is SPRPSGSHRSGSGR. Positions 429–439 are enriched in basic residues; that stretch reads PPRHDRTRRHS.

Belongs to the DEAD box helicase family. RhlB subfamily. Component of the RNA degradosome, which is a multiprotein complex involved in RNA processing and mRNA degradation.

It is found in the cytoplasm. The enzyme catalyses ATP + H2O = ADP + phosphate + H(+). DEAD-box RNA helicase involved in RNA degradation. Has RNA-dependent ATPase activity and unwinds double-stranded RNA. This Shewanella amazonensis (strain ATCC BAA-1098 / SB2B) protein is ATP-dependent RNA helicase RhlB.